Reading from the N-terminus, the 429-residue chain is Ribosomal RNA small subunit methyltransferase B (429 aa).

Residues 254-260, Asp277, Asp303, and Asp322 contribute to the S-adenosyl-L-methionine site; that span reads CAAPGGK. The active-site Nucleophile is Cys375.

The protein belongs to the class I-like SAM-binding methyltransferase superfamily. RsmB/NOP family.

The protein localises to the cytoplasm. The catalysed reaction is cytidine(967) in 16S rRNA + S-adenosyl-L-methionine = 5-methylcytidine(967) in 16S rRNA + S-adenosyl-L-homocysteine + H(+). Functionally, specifically methylates the cytosine at position 967 (m5C967) of 16S rRNA. The sequence is that of Ribosomal RNA small subunit methyltransferase B from Escherichia coli O157:H7.